Here is a 563-residue protein sequence, read N- to C-terminus: Serine palmitoyltransferase 3 (563 aa).

The segment covering 1 to 29 (MANLNDSAVTNGTLHNPKTQQGKRQSTGC) has biased composition (polar residues). A disordered region spans residues 1–32 (MANLNDSAVTNGTLHNPKTQQGKRQSTGCVKN). The chain crosses the membrane as a helical span at residues 59-79 (PLYVYVLTYMGYGIGILFGYL). At K371 the chain carries N6-(pyridoxal phosphate)lysine.

This sequence belongs to the class-II pyridoxal-phosphate-dependent aminotransferase family. In terms of assembly, component of the serine palmitoyltransferase (SPT) complex, which is composed of SPTLC1, SPTLC2 or SPTLC3 and SPTSSA or SPTSSB. The heterodimer consisting of SPTLC1 and SPTLC2/SPTLC3 forms the catalytic core of the enzyme, while SPTSSA or SPTSSB subunits determine substrate specificity. SPT also interacts with ORMDL proteins, especially ORMDL3, which negatively regulate SPT activity in the presence of ceramides. Pyridoxal 5'-phosphate serves as cofactor. In terms of tissue distribution, expressed in white and brown adipose tissues.

The protein localises to the endoplasmic reticulum membrane. The enzyme catalyses L-serine + hexadecanoyl-CoA + H(+) = 3-oxosphinganine + CO2 + CoA. The catalysed reaction is dodecanoyl-CoA + L-serine + H(+) = 3-oxotetradecasphinganine + CO2 + CoA. It carries out the reaction tetradecanoyl-CoA + L-serine + H(+) = 3-oxohexadecasphinganine + CO2 + CoA. It catalyses the reaction octadecanoyl-CoA + L-serine + H(+) = 3-oxoeicosasphinganine + CO2 + CoA. It functions in the pathway lipid metabolism; sphingolipid metabolism. Its activity is regulated as follows. SPT complex catalytic activity is negatively regulated by ORMDL proteins, including ORMDL3, in the presence of ceramides. This mechanism allows to maintain ceramide levels at sufficient concentrations for the production of complex sphingolipids, but which prevents the accumulation of ceramides to levels that trigger apoptosis. Functionally, component of the serine palmitoyltransferase multisubunit enzyme (SPT) that catalyzes the initial and rate-limiting step in sphingolipid biosynthesis by condensing L-serine and activated acyl-CoA (most commonly palmitoyl-CoA) to form long-chain bases. The SPT complex is composed of SPTLC1, SPTLC2 or SPTLC3 and SPTSSA or SPTSSB. Within this complex, the heterodimer consisting of SPTLC1 and SPTLC2/SPTLC3 forms the catalytic core. The composition of the serine palmitoyltransferase (SPT) complex determines the substrate preference. The SPTLC1-SPTLC2-SPTSSA complex shows a strong preference for C16-CoA substrate, while the SPTLC1-SPTLC3-SPTSSA isozyme uses both C14-CoA and C16-CoA as substrates, with a slight preference for C14-CoA. The SPTLC1-SPTLC2-SPTSSB complex shows a strong preference for C18-CoA substrate, while the SPTLC1-SPTLC3-SPTSSB isozyme displays an ability to use a broader range of acyl-CoAs, without apparent preference. The chain is Serine palmitoyltransferase 3 from Mus musculus (Mouse).